A 141-amino-acid polypeptide reads, in one-letter code: Large ribosomal subunit protein uL11 (141 aa).

It belongs to the universal ribosomal protein uL11 family. In terms of assembly, part of the ribosomal stalk of the 50S ribosomal subunit. Interacts with L10 and the large rRNA to form the base of the stalk. L10 forms an elongated spine to which L12 dimers bind in a sequential fashion forming a multimeric L10(L12)X complex. One or more lysine residues are methylated.

In terms of biological role, forms part of the ribosomal stalk which helps the ribosome interact with GTP-bound translation factors. This chain is Large ribosomal subunit protein uL11, found in Trichodesmium erythraeum (strain IMS101).